A 400-amino-acid polypeptide reads, in one-letter code: Tyrosine--tRNA ligase 2 (400 aa).

Residues 46-55 carry the 'HIGH' region motif; it reads PSAPDIHLGH. The short motif at 230 to 234 is the 'KMSKS' region element; sequence KMSKS. Residue Lys-233 coordinates ATP. Residues 339–399 enclose the S4 RNA-binding domain; it reads NNLIEAIVKI…GKKKIVKLLV (61 aa).

Belongs to the class-I aminoacyl-tRNA synthetase family. TyrS type 2 subfamily. In terms of assembly, homodimer.

It is found in the cytoplasm. The catalysed reaction is tRNA(Tyr) + L-tyrosine + ATP = L-tyrosyl-tRNA(Tyr) + AMP + diphosphate + H(+). Functionally, catalyzes the attachment of tyrosine to tRNA(Tyr) in a two-step reaction: tyrosine is first activated by ATP to form Tyr-AMP and then transferred to the acceptor end of tRNA(Tyr). This is Tyrosine--tRNA ligase 2 from Clostridium acetobutylicum (strain ATCC 824 / DSM 792 / JCM 1419 / IAM 19013 / LMG 5710 / NBRC 13948 / NRRL B-527 / VKM B-1787 / 2291 / W).